The sequence spans 884 residues: Translation initiation factor IF-2 (884 aa).

Disordered stretches follow at residues 42-62 and 123-254; these read DVQK…QEEV and EPKG…GGKK. Positions 194–212 are enriched in basic and acidic residues; it reads PAERREVVIPPKRKMEERA. A compositionally biased stretch (low complexity) spans 234–248; sequence EPETPAGGAPGAKKG. The 170-residue stretch at 384–553 folds into the tr-type G domain; that stretch reads KRPPVVTIMG…LLQADVMDLK (170 aa). The G1 stretch occupies residues 393 to 400; the sequence is GHVDHGKT. 393-400 lines the GTP pocket; that stretch reads GHVDHGKT. The segment at 418 to 422 is G2; sequence GITQH. The segment at 439–442 is G3; sequence DTPG. Residues 439-443 and 493-496 contribute to the GTP site; these read DTPGH and NKID. Residues 493-496 are G4; it reads NKID. Residues 529–531 form a G5 region; that stretch reads SAK.

It belongs to the TRAFAC class translation factor GTPase superfamily. Classic translation factor GTPase family. IF-2 subfamily.

It localises to the cytoplasm. In terms of biological role, one of the essential components for the initiation of protein synthesis. Protects formylmethionyl-tRNA from spontaneous hydrolysis and promotes its binding to the 30S ribosomal subunits. Also involved in the hydrolysis of GTP during the formation of the 70S ribosomal complex. In Geobacter metallireducens (strain ATCC 53774 / DSM 7210 / GS-15), this protein is Translation initiation factor IF-2.